Consider the following 1427-residue polypeptide: Protein expanded (1427 aa).

One can recognise an FERM domain in the interval 26–399 (RFLALRLLGQ…DTHQWSMKLA (374 aa)). Positions 176-212 (GDAPPGTSNSKDDSGEETSASPSNGGRGLSATTTLPK) are disordered. Residues 192–211 (ETSASPSNGGRGLSATTTLP) show a composition bias toward polar residues. Phosphotyrosine occurs at positions 227 and 423. Disordered regions lie at residues 520–566 (VRPQ…IGSQ) and 611–656 (NSAL…SGVY). Over residues 524 to 544 (DASSNGATIVTNSSVQRNSMG) the composition is skewed to polar residues. Low complexity predominate over residues 545-559 (TTANDSSTATDSPSS). Phosphotyrosine is present on Tyr-679. Positions 688–710 (EETHVQHSDSVDGKKKEDFRPRS) are enriched in basic and acidic residues. 5 disordered regions span residues 688-732 (EETH…DNKH), 766-792 (YVTLPLGDQGEEEVDQPPAPPPPYSAR), 815-880 (APKP…SLKS), 939-963 (HNSNYAGGSQASLHHHHVPSHHRHS), and 1000-1022 (LAPPPPSLPRQPPPPPPPNHPHL). Position 766 is a phosphotyrosine (Tyr-766). Residues 818–838 (PDSPPCSPPVPPAPIPAPPPA) are compositionally biased toward pro residues. The short motif at 842-847 (RDPPPY) is the RXPPXY motif element. Positions 848–859 (SISSKPRPTSLI) are enriched in polar residues. Residues 860–877 (SVSSSAHPAPSAAGSMSS) show a composition bias toward low complexity. Basic residues predominate over residues 951 to 963 (LHHHHVPSHHRHS). The span at 1001–1019 (APPPPSLPRQPPPPPPPNH) shows a compositional bias: pro residues. The SH3-binding signature appears at 1008–1020 (PRQPPPPPPPNHP). Phosphotyrosine is present on Tyr-1103. An SH3-binding motif is present at residues 1149 to 1157 (PPPPPPLHP). Ser-1181 is subject to Phosphoserine. Disordered stretches follow at residues 1190–1267 (DLLP…WAGE) and 1345–1398 (TGQE…LPVQ). 2 stretches are compositionally biased toward pro residues: residues 1214–1230 (PPMPAPSEKPPPIPSKP) and 1237–1246 (PIPPRKPPTL). Composition is skewed to polar residues over residues 1253 to 1262 (SPLTKTSSGA) and 1345 to 1370 (TGQEMPTSSAQPSGATTNGVANSSAG). Basic residues predominate over residues 1376–1388 (KARKGSTVSHRHP).

Forms a complex with Kibra and Mer. Interacts (via RXPPXY motif) with Kibra (via domain WW 1). Interacts with Mer and Hpo (via SARAH domain). Interacts with Schip1; the interaction results in recruitment of Schip1 to the apical cell membrane. Interacts with ack and yki. Post-translationally, phosphorylated by Ack at several tyrosines including Tyr-227, Tyr-423, Tyr-679, Tyr-766 and Tyr-1103.

The protein localises to the apical cell membrane. Its function is as follows. Activates the Hippo/SWH (Sav/Wts/Hpo) signaling pathway, a signaling pathway that plays a pivotal role in organ size control and tumor suppression by restricting proliferation and promoting apoptosis. The core of this pathway is composed of a kinase cascade wherein Hippo (Hpo), in complex with its regulatory protein Salvador (Sav), phosphorylates and activates Warts (Wts) in complex with its regulatory protein Mats, which in turn phosphorylates and inactivates the Yorkie (Yki) oncoprotein. Ex acts synergistically along with Mer and Kibra to regulate the Hippo signaling pathway. Involved in the control of cell proliferation in imaginal disks. May bind to certain proteins of signal transduction pathways by interaction with their SH3 domains. Required for apical localization of Schip1. The sequence is that of Protein expanded (ex) from Drosophila melanogaster (Fruit fly).